We begin with the raw amino-acid sequence, 351 residues long: Nicotinate-nucleotide--dimethylbenzimidazole phosphoribosyltransferase (351 aa).

The Proton acceptor role is filled by E318.

Belongs to the CobT family.

It carries out the reaction 5,6-dimethylbenzimidazole + nicotinate beta-D-ribonucleotide = alpha-ribazole 5'-phosphate + nicotinate + H(+). Its pathway is nucleoside biosynthesis; alpha-ribazole biosynthesis; alpha-ribazole from 5,6-dimethylbenzimidazole: step 1/2. Catalyzes the synthesis of alpha-ribazole-5'-phosphate from nicotinate mononucleotide (NAMN) and 5,6-dimethylbenzimidazole (DMB). This chain is Nicotinate-nucleotide--dimethylbenzimidazole phosphoribosyltransferase, found in Shewanella frigidimarina (strain NCIMB 400).